We begin with the raw amino-acid sequence, 332 residues long: MQAYESGDERGLIYGYVLNGRGGGRRVGRNQIAVLDLLPEESLWLHWDRGVPEAQAWLRDSAGLSEFACDLLLEEATRPRLLDLGAESLLVFLRGVNLNPGAEPEDMVSLRVFADARRVISLRLRPLKAVADLLEDLEAGKGPKTASEVVYYLAHYLTDRVDTLISGIADQLDAVEELVEADERASPDQHQLRTLRRRSAGLRRYLAPQRDIYSQLARYKLSWFVEDDADYWNELNNRLTRNLEELELIRERISVLQEAESRRITERMNRTMYLLGIITGFFLPMSFVTGLLGINVGGIPGADAPHGFWLACLLIGGVATFQWWVFRRLRWL.

The Cytoplasmic portion of the chain corresponds to 1–277 (MQAYESGDER…MNRTMYLLGI (277 aa)). The helical transmembrane segment at 278-286 (ITGFFLPMS) threads the bilayer. The Periplasmic segment spans residues 287 to 307 (FVTGLLGINVGGIPGADAPHG). A helical membrane pass occupies residues 308 to 323 (FWLACLLIGGVATFQW). Residues 324–332 (WVFRRLRWL) lie on the Cytoplasmic side of the membrane.

This sequence belongs to the CorA metal ion transporter (MIT) (TC 1.A.35) family. As to quaternary structure, homopentamer.

The protein localises to the cell inner membrane. It carries out the reaction Zn(2+)(in) = Zn(2+)(out). The enzyme catalyses Cd(2+)(in) = Cd(2+)(out). It catalyses the reaction Ni(2+)(in) = Ni(2+)(out). The catalysed reaction is Co(2+)(in) = Co(2+)(out). In terms of biological role, transports divalent cations including Zn(2+), Cd(2+), Ni(2+) and Co(2+). The proton gradient has a small influence on transport suggesting that the transport is probably not proton-dependent. The protein is Divalent cation transporter CmaX of Pseudomonas aeruginosa (strain ATCC 15692 / DSM 22644 / CIP 104116 / JCM 14847 / LMG 12228 / 1C / PRS 101 / PAO1).